A 485-amino-acid chain; its full sequence is NADH-quinone oxidoreductase subunit N (485 aa).

Transmembrane regions (helical) follow at residues 8–28 (LIAL…MLSI), 35–55 (FLNA…LWFV), 71–91 (GFAM…CTFA), 105–125 (FYLL…ANHL), 127–147 (SLFL…GYAF), 159–179 (YTIL…LVYA), 203–223 (LLAG…LVPF), 235–255 (PAPV…GVVM), 271–291 (VVLA…ALSQ), 297–317 (LLGY…IALQ), 326–346 (VGVY…VVSL), 373–393 (AAVM…LGFI), 408–430 (WWLV…RVAV), and 455–475 (IVVL…QPLI).

This sequence belongs to the complex I subunit 2 family. In terms of assembly, NDH-1 is composed of 13 different subunits. Subunits NuoA, H, J, K, L, M, N constitute the membrane sector of the complex.

The protein resides in the cell inner membrane. It carries out the reaction a quinone + NADH + 5 H(+)(in) = a quinol + NAD(+) + 4 H(+)(out). NDH-1 shuttles electrons from NADH, via FMN and iron-sulfur (Fe-S) centers, to quinones in the respiratory chain. The immediate electron acceptor for the enzyme in this species is believed to be ubiquinone. Couples the redox reaction to proton translocation (for every two electrons transferred, four hydrogen ions are translocated across the cytoplasmic membrane), and thus conserves the redox energy in a proton gradient. The chain is NADH-quinone oxidoreductase subunit N from Escherichia coli O6:K15:H31 (strain 536 / UPEC).